A 250-amino-acid polypeptide reads, in one-letter code: 5'-nucleotidase SurE (250 aa).

A divalent metal cation is bound by residues Asp-8, Asp-9, Ser-39, and Asn-92.

This sequence belongs to the SurE nucleotidase family. Requires a divalent metal cation as cofactor.

It localises to the cytoplasm. The catalysed reaction is a ribonucleoside 5'-phosphate + H2O = a ribonucleoside + phosphate. In terms of biological role, nucleotidase that shows phosphatase activity on nucleoside 5'-monophosphates. The sequence is that of 5'-nucleotidase SurE from Vibrio cholerae serotype O1 (strain ATCC 39315 / El Tor Inaba N16961).